The chain runs to 493 residues: Cytochrome P450 monooxygenase esdpG (493 aa).

Residues 10–30 form a helical membrane-spanning segment; that stretch reads VLGVTWLSALFTLGSLSVFWL. Cys434 is a binding site for heme.

This sequence belongs to the cytochrome P450 family. Requires heme as cofactor.

It is found in the membrane. The protein operates within secondary metabolite biosynthesis; terpenoid biosynthesis. Cytochrome P450 monooxygenasee; part of the cluster that mediates the biosynthesis of shearones, diterpenoid pyrones (DPs) which are structurally diverse meroterpenoids consisting of a diterpene linked by a pyrone, and which may exhibit a range of bioactivities. Whitin the pathway, esdpG takes part in the molecular scaffold modification via the hydroxylation at C-11 and C-12 and can transform shearone A into shearone C and shearone B into shearone D. The molecular scaffold is commonly biosynthesized by a series of enzymes including the non-reducing polyketide synthase (NR-PKS) esdpA that generates an alpha-pyrone; the prenyltransferase esdpC that attaches a geranylgeranyl pyrophosphate (GGPP) produced by the GGPP synthase (GGPPS) esdpD onto the pyrone unit; the FAD-dependent monooxygenase esdpE that converts an olefin on the diterpene unit into an epoxide; and the terpene cyclase esdpB that catalyzes the cyclization reactions to give the molecular backbone shearone A. In the modification steps, esdpF oxidizes the hydroxy group to a ketone at C-3 and esdpG then attaches hydroxy groups at both C-11 and C-12. After that, esdpI hydroxylates at C-20 and esdpH hydroxylates at C-6'. The ether bridge is generated by nucleophilic attack of the hydroxy group at C-20 to the carbonyl carbon at C-3. EsdpH can also functions prior to esdpI. The different combinations of these modification enzymes lead to the production of diverse shearone derivatives, shearone I being the end product of the pathway. The alpha-ketoglutarate-dependent dioxygenase esdpJ seems not to be involved in this pathway. This Penicillium shearii (Eupenicillium shearii) protein is Cytochrome P450 monooxygenase esdpG.